A 635-amino-acid chain; its full sequence is Cerevisin (635 aa).

Residues 1–19 (MKLENTLFTLGALGSISAA) form the signal peptide. Residues 20-280 (LVIPNLENAA…VERDSIVEAT (261 aa)) constitute a propeptide that is removed on maturation. Basic and acidic residues-rich tracts occupy residues 35 to 50 (INKE…VEFT), 74 to 85 (KGQDKESPEFNG), 94 to 109 (SAHE…HESS), and 126 to 136 (GCHENKVEEKK). Positions 35–155 (INKEDHHERP…KHHEKTLEKG (121 aa)) are disordered. A compositionally biased stretch (basic residues) spans 137–155 (MKGKKVKGKKHHEKTLEKG). The Inhibitor I9 domain maps to 182–278 (RYIIVFKRGA…DFVERDSIVE (97 aa)). Residues 289 to 614 (PWGLARISHR…KQELNMDEFI (326 aa)) form the Peptidase S8 domain. Active-site charge relay system residues include Asp-325 and His-357. A disulfide bridge connects residues Cys-460 and Cys-491. Ser-519 (charge relay system) is an active-site residue. Residues 575–635 (DTPNVLIYNG…RDILDKLNII (61 aa)) constitute a propeptide that is removed on maturation. N-linked (GlcNAc...) asparagine glycosylation occurs at Asn-594.

The protein belongs to the peptidase S8 family. Post-translationally, activated by N- and C-terminal proteolytic cleavage. Protease B (PrB/PRB1) processing requires at least 4 cleavages. First, the signal peptide is removed from the 76 kDa preproprotease B by signal peptidase in the ER. Then, PrB removes its own Pro-region (in trans) at the N-terminus, producing a 39 kDa form before exiting the ER. In the Golgi complex, the C-terminal Post-region of the 40 kDa proprotease B undergoes protease A (PrA/PEP4)-mediated processing to a 37 kDa intermediate, which in turn is quickly processed again by PrB in trans to yield the 31 kDa mature PrB. Glycosylated. Preproprotease B is a 76 kDa unglycosylated precursor that enters the endoplasmic reticulum (ER), where it receives one Asn-linked and an undetermined number of non-Asn-linked carbohydrate side chains. In the Golgi complex, the 39 kDa form becomes 40 kDa, due to elaboration of the Asn-linked side chain. The ultimate processing step removes a peptide containing the Asn-linked chain. Mature PrB has only non-Asn-linked carbohydrates.

It localises to the vacuole. It carries out the reaction Hydrolysis of proteins with broad specificity, and of Bz-Arg-OEt &gt; Ac-Tyr-OEt. Does not hydrolyze peptide amides.. Functionally, vacuolar proteinase B involved in protein degradation in the vacuole. Among other substrates, acts on carboxypeptidase Y (cpY/PRC1) to activate it by processing its Pro-peptide. Required for meiosis and spore formation, and for optimal survival in stationary phase. The sequence is that of Cerevisin (PRB1) from Saccharomyces cerevisiae (strain ATCC 204508 / S288c) (Baker's yeast).